A 132-amino-acid polypeptide reads, in one-letter code: MRHYEIVFMVHPDQSEQVPGMIERYSATITNAAGQIHRLEDWGRRQLAYPINKLHKAHYVLLNVEAPQEAIDELETNFRFNDAVIRSMVMRVKHAVTEASPMVKAKDERRGDRREDFANETADDADAGDSEE.

Residues 99–132 (ASPMVKAKDERRGDRREDFANETADDADAGDSEE) form a disordered region. A compositionally biased stretch (basic and acidic residues) spans 104-117 (KAKDERRGDRREDF). Over residues 121-132 (TADDADAGDSEE) the composition is skewed to acidic residues.

Belongs to the bacterial ribosomal protein bS6 family.

In terms of biological role, binds together with bS18 to 16S ribosomal RNA. This Serratia proteamaculans (strain 568) protein is Small ribosomal subunit protein bS6.